A 1214-amino-acid chain; its full sequence is Myosin-1 (1214 aa).

Residues 1–21 are disordered; sequence MAIIKRGARNKTAQEPAKRSA. In terms of domain architecture, Myosin motor spans 36–715; it reads VGVSDLTLLS…TLFALEHMRD (680 aa). 129-136 contributes to the ATP binding site; it reads GESGAGKT. Phosphoserine is present on Ser-357. The interval 404 to 486 is actin-binding; that stretch reads SIGILDIYGF…PGIFAAMNDS (83 aa). 2 IQ domains span residues 719–739 and 740–765; these read YNMAARIQRAWRRFLQRRIDS and ATRIQRAIREKKGGNKYEKLRDEGSK. Residues 771 to 961 form the TH1 domain; sequence KERRTMSLLG…TILVRRGHPA (191 aa). Disordered stretches follow at residues 926-1090, 1129-1177, and 1193-1214; these read KPGK…SELP, HQGG…AAAQ, and NKMRVESDGEDNGNDDDDDDDW. The segment covering 965 to 980 has biased composition (basic residues); sequence QKKKPKKGKGHSKHHS. Low complexity-rich tracts occupy residues 981–1000 and 1037–1057; these read TSTSAPRSSVQSSQPSAPVS and AAQPQATPQPAQVTQPQQKKV. Pro residues predominate over residues 1058–1067; the sequence is APPPPPPPPM. Positions 1069–1131 constitute an SH3 domain; it reads SSEPKYEAAY…PTNYVVKHQG (63 aa). The span at 1157–1177 shows a compositional bias: low complexity; that stretch reads VSSSQSETATTATPASVAAAQ. Acidic residues predominate over residues 1200 to 1214; it reads DGEDNGNDDDDDDDW.

The protein belongs to the TRAFAC class myosin-kinesin ATPase superfamily. Myosin family. In terms of processing, phosphorylation of the TEDS site (Ser-357) is required for the polarization of the actin cytoskeleton. Phosphorylation probably activates the myosin-I ATPase activity.

It localises to the cytoplasm. The protein localises to the cytoskeleton. The protein resides in the actin patch. In terms of biological role, type-I myosin implicated in the organization of the actin cytoskeleton. Required for proper actin cytoskeleton polarization. At the cell cortex, assembles in patch-like structures together with proteins from the actin-polymerizing machinery and promotes actin assembly. Functions as actin nucleation-promoting factor (NPF) for the Arp2/3 complex. This chain is Myosin-1 (MYO1), found in Vanderwaltozyma polyspora (strain ATCC 22028 / DSM 70294 / BCRC 21397 / CBS 2163 / NBRC 10782 / NRRL Y-8283 / UCD 57-17) (Kluyveromyces polysporus).